Reading from the N-terminus, the 517-residue chain is Protein disulfide-isomerase A5 (517 aa).

The signal sequence occupies residues 1 to 21; it reads MARAWGLLLAIGVVLPTWLSS. 4 disulfide bridges follow: C83–C92, C180–C183, C303–C306, and C424–C427. 3 consecutive Thioredoxin domains span residues 132 to 259, 268 to 382, and 376 to 504; these read FLKD…NPLP, PWAD…NPEA, and WMQN…TLRE. The Prevents secretion from ER motif lies at 514-517; sequence REEL.

Belongs to the protein disulfide isomerase family. In terms of assembly, interacts with CALR (via P-domain).

The protein resides in the endoplasmic reticulum lumen. The catalysed reaction is Catalyzes the rearrangement of -S-S- bonds in proteins.. The polypeptide is Protein disulfide-isomerase A5 (Pdia5) (Mus musculus (Mouse)).